Here is a 138-residue protein sequence, read N- to C-terminus: Lutropin subunit beta (138 aa).

The first 19 residues, 1–19 (RYQELTVLLLLLLEGGSWG), serve as a signal peptide directing secretion. 6 disulfide bridges follow: Cys-27–Cys-75, Cys-41–Cys-90, Cys-44–Cys-128, Cys-52–Cys-106, Cys-56–Cys-108, and Cys-111–Cys-118. N-linked (GlcNAc...) asparagine glycosylation occurs at Asn-31.

It belongs to the glycoprotein hormones subunit beta family. Heterodimer of a common alpha chain and a unique beta chain which confers biological specificity to thyrotropin, lutropin, follitropin and gonadotropin.

It localises to the secreted. In terms of biological role, promotes spermatogenesis and ovulation by stimulating the testes and ovaries to synthesize steroids. This chain is Lutropin subunit beta (LHB), found in Osphranter rufus (Red kangaroo).